The chain runs to 215 residues: ATP-dependent Clp protease proteolytic subunit 1 (215 aa).

The active-site Nucleophile is Ser108. His133 is an active-site residue.

This sequence belongs to the peptidase S14 family. Fourteen ClpP subunits assemble into 2 heptameric rings which stack back to back to give a disk-like structure with a central cavity, resembling the structure of eukaryotic proteasomes.

It localises to the cytoplasm. It carries out the reaction Hydrolysis of proteins to small peptides in the presence of ATP and magnesium. alpha-casein is the usual test substrate. In the absence of ATP, only oligopeptides shorter than five residues are hydrolyzed (such as succinyl-Leu-Tyr-|-NHMec, and Leu-Tyr-Leu-|-Tyr-Trp, in which cleavage of the -Tyr-|-Leu- and -Tyr-|-Trp bonds also occurs).. In terms of biological role, cleaves peptides in various proteins in a process that requires ATP hydrolysis. Has a chymotrypsin-like activity. Plays a major role in the degradation of misfolded proteins. The sequence is that of ATP-dependent Clp protease proteolytic subunit 1 from Paraburkholderia xenovorans (strain LB400).